Consider the following 155-residue polypeptide: Ribosomal RNA large subunit methyltransferase H (155 aa).

An S-adenosyl-L-methionine-binding site is contributed by Gly103.

It belongs to the RNA methyltransferase RlmH family. Homodimer.

It localises to the cytoplasm. The enzyme catalyses pseudouridine(1915) in 23S rRNA + S-adenosyl-L-methionine = N(3)-methylpseudouridine(1915) in 23S rRNA + S-adenosyl-L-homocysteine + H(+). Specifically methylates the pseudouridine at position 1915 (m3Psi1915) in 23S rRNA. The protein is Ribosomal RNA large subunit methyltransferase H of Caulobacter vibrioides (strain ATCC 19089 / CIP 103742 / CB 15) (Caulobacter crescentus).